Consider the following 446-residue polypeptide: Tubulin beta-6 chain (446 aa).

GTP-binding residues include Gln-11, Glu-69, Ser-138, Gly-142, Thr-143, Gly-144, Asn-204, and Asn-226. A Mg(2+)-binding site is contributed by Glu-69. The segment at 426-446 is disordered; it reads QDATADEEEYEDEEEVQADDM. Residues 429-446 show a composition bias toward acidic residues; that stretch reads TADEEEYEDEEEVQADDM.

It belongs to the tubulin family. As to quaternary structure, dimer of alpha and beta chains. A typical microtubule is a hollow water-filled tube with an outer diameter of 25 nm and an inner diameter of 15 nM. Alpha-beta heterodimers associate head-to-tail to form protofilaments running lengthwise along the microtubule wall with the beta-tubulin subunit facing the microtubule plus end conferring a structural polarity. Microtubules usually have 13 protofilaments but different protofilament numbers can be found in some organisms and specialized cells. Requires Mg(2+) as cofactor.

It localises to the cytoplasm. The protein resides in the cytoskeleton. In terms of biological role, tubulin is the major constituent of microtubules, a cylinder consisting of laterally associated linear protofilaments composed of alpha- and beta-tubulin heterodimers. Microtubules grow by the addition of GTP-tubulin dimers to the microtubule end, where a stabilizing cap forms. Below the cap, tubulin dimers are in GDP-bound state, owing to GTPase activity of alpha-tubulin. This Zea mays (Maize) protein is Tubulin beta-6 chain (TUBB6).